Reading from the N-terminus, the 140-residue chain is FlaA locus uncharacterized protein YlxG (140 aa).

The interval 1–21 (MTSISSEYKLPEKTNTVSTNN) is disordered.

It belongs to the FlgD family.

This chain is FlaA locus uncharacterized protein YlxG (ylxG), found in Bacillus subtilis (strain 168).